The sequence spans 188 residues: Ribosome-recycling factor (188 aa).

It belongs to the RRF family.

The protein localises to the cytoplasm. Functionally, responsible for the release of ribosomes from messenger RNA at the termination of protein biosynthesis. May increase the efficiency of translation by recycling ribosomes from one round of translation to another. The polypeptide is Ribosome-recycling factor (Caulobacter vibrioides (strain NA1000 / CB15N) (Caulobacter crescentus)).